We begin with the raw amino-acid sequence, 460 residues long: Benzyl alcohol O-benzoyltransferase (460 aa).

Residues His167 and Asp382 each act as proton acceptor in the active site.

It belongs to the plant acyltransferase family. Specifically expressed in flowers, mainly in the limb of flowers corollas, and, at low levels, in roots, stems, sepals and leaves.

The enzyme catalyses benzyl alcohol + benzoyl-CoA = benzyl benzoate + CoA. It carries out the reaction benzyl alcohol + acetyl-CoA = benzyl acetate + CoA. It catalyses the reaction 3-hydroxybenzyl alcohol + acetyl-CoA = 3-hydroxy-benzyl acetate + CoA. The catalysed reaction is 3-hydroxybenzyl alcohol + benzoyl-CoA = 3-hydroxy-benzyl benzoate + CoA. The enzyme catalyses 2-phenylethanol + benzoyl-CoA = phenethyl benzoate + CoA. It carries out the reaction (3Z)-hex-3-en-1-ol + benzoyl-CoA = (3Z)-hex-3-en-1-yl benzoate + CoA. It catalyses the reaction (2E)-geraniol + acetyl-CoA = (2E)-geranyl acetate + CoA. The catalysed reaction is butan-1-ol + benzoyl-CoA = butyl benzoate + CoA. The enzyme catalyses (2E)-geraniol + benzoyl-CoA = (2E)-geranyl benzoate + CoA. It carries out the reaction octan-1-ol + benzoyl-CoA = octyl benzoate + CoA. It participates in aromatic compound metabolism; benzoyl-CoA degradation. In terms of biological role, involved in the production of volatile organic compounds (VOCs), including floral volatile benzenoids and phenylpropanoids (FVBP), in flowers of fragrant cultivars (e.g. cv. Mitchell and cv. V26), scent attracting pollinators (e.g. the night-active hawkmoth pollinator Manduca sexta). Acyltransferase that catalyzes the transfer of benzoyl and acetyl moieties to a large variety of potential substrate alcohols, and involved in the formation of volatile esters benzyl benzoate and phenylethyl benzoate from benzoyl-CoA. With acetyl-CoA, mainly active on benzyl alcohol, and, to a lower extent, on 3-hydroxybenzyl alcohol, geraniol, and 2-phenylethanol, but barely active on butanol, 1-octanol, 4-hydroxy-benzyl alcohol, 2-hexanol, cis-3-hexen-1-ol and linalool. With benzoyl-CoA, mainly active on benzyl alcohol, but also efficient on several substrates, including 3-hydroxybenzyl alcohol, 2-phenylethanol, geraniol, butanol, cis-3-hexen-1-ol and 1-octanol. This is Benzyl alcohol O-benzoyltransferase from Petunia hybrida (Petunia).